We begin with the raw amino-acid sequence, 529 residues long: Bifunctional purine biosynthesis protein PurH (529 aa).

The 148-residue stretch at 1 to 148 (MNNARPIRRA…KNHKDTTIIV (148 aa)) folds into the MGS-like domain.

This sequence belongs to the PurH family.

It carries out the reaction (6R)-10-formyltetrahydrofolate + 5-amino-1-(5-phospho-beta-D-ribosyl)imidazole-4-carboxamide = 5-formamido-1-(5-phospho-D-ribosyl)imidazole-4-carboxamide + (6S)-5,6,7,8-tetrahydrofolate. The enzyme catalyses IMP + H2O = 5-formamido-1-(5-phospho-D-ribosyl)imidazole-4-carboxamide. The protein operates within purine metabolism; IMP biosynthesis via de novo pathway; 5-formamido-1-(5-phospho-D-ribosyl)imidazole-4-carboxamide from 5-amino-1-(5-phospho-D-ribosyl)imidazole-4-carboxamide (10-formyl THF route): step 1/1. It participates in purine metabolism; IMP biosynthesis via de novo pathway; IMP from 5-formamido-1-(5-phospho-D-ribosyl)imidazole-4-carboxamide: step 1/1. The sequence is that of Bifunctional purine biosynthesis protein PurH from Shewanella piezotolerans (strain WP3 / JCM 13877).